A 133-amino-acid polypeptide reads, in one-letter code: uncharacterized protein (133 aa).

One can recognise an FAS1 domain in the interval 1 to 130 (MPNIVEIAVS…GIIHVIDNVI (130 aa)).

This is an uncharacterized protein from Synechocystis sp. (strain ATCC 27184 / PCC 6803 / Kazusa).